We begin with the raw amino-acid sequence, 178 residues long: Interleukin-10 (178 aa).

Positions 1-18 (MPNPVLLYCLVLLAGMGT) are cleaved as a signal peptide. 2 cysteine pairs are disulfide-bonded: Cys30-Cys126 and Cys80-Cys132. A glycan (N-linked (GlcNAc...) asparagine) is linked at Asn134.

The protein belongs to the IL-10 family. As to quaternary structure, homodimer. Interacts with IL10RA and IL10RB.

The protein resides in the secreted. In terms of biological role, major immune regulatory cytokine that acts on many cells of the immune system where it has profound anti-inflammatory functions, limiting excessive tissue disruption caused by inflammation. Mechanistically, IL10 binds to its heterotetrameric receptor comprising IL10RA and IL10RB leading to JAK1 and STAT2-mediated phosphorylation of STAT3. In turn, STAT3 translocates to the nucleus where it drives expression of anti-inflammatory mediators. Targets antigen-presenting cells (APCs) such as macrophages and monocytes and inhibits their release of pro-inflammatory cytokines including granulocyte-macrophage colony-stimulating factor /GM-CSF, granulocyte colony-stimulating factor/G-CSF, IL-1 alpha, IL-1 beta, IL-6, IL-8 and TNF-alpha. Also interferes with antigen presentation by reducing the expression of MHC-class II and co-stimulatory molecules, thereby inhibiting their ability to induce T cell activation. In addition, controls the inflammatory response of macrophages by reprogramming essential metabolic pathways including mTOR signaling. This chain is Interleukin-10 (IL10), found in Marmota monax (Woodchuck).